A 495-amino-acid polypeptide reads, in one-letter code: Cytochrome P450 2E1 (495 aa).

298-303 (FAGTET) lines the substrate pocket. Cys437 serves as a coordination point for heme.

This sequence belongs to the cytochrome P450 family. As to quaternary structure, interacts with chaperones HSP70 and HSP90; this interaction is required for initial targeting to mitochondria. The cofactor is heme.

The protein resides in the endoplasmic reticulum membrane. It localises to the microsome membrane. It is found in the mitochondrion inner membrane. The catalysed reaction is an organic molecule + reduced [NADPH--hemoprotein reductase] + O2 = an alcohol + oxidized [NADPH--hemoprotein reductase] + H2O + H(+). It catalyses the reaction (5Z,8Z,11Z)-eicosatrienoate + reduced [NADPH--hemoprotein reductase] + O2 = 19-hydroxy-(5Z,8Z,11Z)-eicosatrienoate + oxidized [NADPH--hemoprotein reductase] + H2O + H(+). The enzyme catalyses (5Z,8Z,11Z,14Z,17Z)-eicosapentaenoate + reduced [NADPH--hemoprotein reductase] + O2 = 19-hydroxy-(5Z,8Z,11Z,14Z,17Z)-eicosapentaenoate + oxidized [NADPH--hemoprotein reductase] + H2O + H(+). It carries out the reaction (4Z,7Z,10Z,13Z,16Z,19Z)-docosahexaenoate + reduced [NADPH--hemoprotein reductase] + O2 = 21-hydroxy-(4Z,7Z,10Z,13Z,16Z,19Z)-docosahexaenoate + oxidized [NADPH--hemoprotein reductase] + H2O + H(+). The catalysed reaction is dodecanoate + reduced [NADPH--hemoprotein reductase] + O2 = 11-hydroxydodecanoate + oxidized [NADPH--hemoprotein reductase] + H2O + H(+). It catalyses the reaction tetradecanoate + reduced [NADPH--hemoprotein reductase] + O2 = 13-hydroxytetradecanoate + oxidized [NADPH--hemoprotein reductase] + H2O + H(+). The enzyme catalyses 4-nitrophenol + NADPH + O2 + H(+) = 4-nitrocatechol + NADP(+) + H2O. It functions in the pathway lipid metabolism; fatty acid metabolism. The omega-1 hydroxylase activity is stimulated by cytochrome b5. Functionally, a cytochrome P450 monooxygenase involved in the metabolism of fatty acids. Mechanistically, uses molecular oxygen inserting one oxygen atom into a substrate, and reducing the second into a water molecule, with two electrons provided by NADPH via cytochrome P450 reductase (NADPH--hemoprotein reductase). Catalyzes the hydroxylation of carbon-hydrogen bonds. Hydroxylates fatty acids specifically at the omega-1 position displaying the highest catalytic activity for saturated fatty acids. May be involved in the oxidative metabolism of xenobiotics. This is Cytochrome P450 2E1 (CYP2E1) from Sus scrofa (Pig).